The chain runs to 53 residues: ATP synthase protein 8 (53 aa).

The chain crosses the membrane as a helical span at residues 5–25 (APISWLTLFFVFSITLVIFNI).

Belongs to the ATPase protein 8 family. F-type ATPases have 2 components, CF(1) - the catalytic core - and CF(0) - the membrane proton channel.

It is found in the mitochondrion membrane. Its function is as follows. Mitochondrial membrane ATP synthase (F(1)F(O) ATP synthase or Complex V) produces ATP from ADP in the presence of a proton gradient across the membrane which is generated by electron transport complexes of the respiratory chain. F-type ATPases consist of two structural domains, F(1) - containing the extramembraneous catalytic core and F(0) - containing the membrane proton channel, linked together by a central stalk and a peripheral stalk. During catalysis, ATP synthesis in the catalytic domain of F(1) is coupled via a rotary mechanism of the central stalk subunits to proton translocation. Part of the complex F(0) domain. Minor subunit located with subunit a in the membrane. This is ATP synthase protein 8 from Aedes aegypti (Yellowfever mosquito).